The primary structure comprises 211 residues: Peptidyl-tRNA hydrolase (211 aa).

Tyrosine 15 serves as a coordination point for tRNA. Residue histidine 20 is the Proton acceptor of the active site. Phenylalanine 66, asparagine 68, and asparagine 114 together coordinate tRNA. The tract at residues 189–211 (TKPPRPKATRPAQAQAAPQAGAD) is disordered. Positions 197–211 (TRPAQAQAAPQAGAD) are enriched in low complexity.

The protein belongs to the PTH family. In terms of assembly, monomer.

The protein resides in the cytoplasm. The enzyme catalyses an N-acyl-L-alpha-aminoacyl-tRNA + H2O = an N-acyl-L-amino acid + a tRNA + H(+). In terms of biological role, hydrolyzes ribosome-free peptidyl-tRNAs (with 1 or more amino acids incorporated), which drop off the ribosome during protein synthesis, or as a result of ribosome stalling. Its function is as follows. Catalyzes the release of premature peptidyl moieties from peptidyl-tRNA molecules trapped in stalled 50S ribosomal subunits, and thus maintains levels of free tRNAs and 50S ribosomes. The protein is Peptidyl-tRNA hydrolase of Acidovorax ebreus (strain TPSY) (Diaphorobacter sp. (strain TPSY)).